The following is a 527-amino-acid chain: Peptide chain release factor 3 (527 aa).

The tr-type G domain occupies 9-277; that stretch reads AKRRTFAIIS…AVVDWAPKPL (269 aa). Residues 18 to 25, 86 to 90, and 140 to 143 contribute to the GTP site; these read SHPDAGKT, DTPGH, and NKLD.

The protein belongs to the TRAFAC class translation factor GTPase superfamily. Classic translation factor GTPase family. PrfC subfamily.

It is found in the cytoplasm. In terms of biological role, increases the formation of ribosomal termination complexes and stimulates activities of RF-1 and RF-2. It binds guanine nucleotides and has strong preference for UGA stop codons. It may interact directly with the ribosome. The stimulation of RF-1 and RF-2 is significantly reduced by GTP and GDP, but not by GMP. This is Peptide chain release factor 3 from Stutzerimonas stutzeri (strain A1501) (Pseudomonas stutzeri).